A 258-amino-acid chain; its full sequence is Phycoerythrobilin:ferredoxin oxidoreductase (258 aa).

It belongs to the HY2 family.

It carries out the reaction (3Z)-phycoerythrobilin + oxidized 2[4Fe-4S]-[ferredoxin] = 15,16-dihydrobiliverdin + reduced 2[4Fe-4S]-[ferredoxin] + 2 H(+). Functionally, catalyzes the two-electron reduction of the C2 and C3(1) diene system of 15,16-dihydrobiliverdin. This Prochlorococcus marinus (strain NATL2A) protein is Phycoerythrobilin:ferredoxin oxidoreductase.